The chain runs to 330 residues: Dimethyladenosine transferase 1, mitochondrial (330 aa).

The transit peptide at 1 to 84 directs the protein to the mitochondrion; sequence MAQPSARVLQ…RSILRRHPQR (84 aa). S-adenosyl-L-methionine-binding positions include 38–41, asparagine 39, leucine 41, glycine 67, glutamate 89, aspartate 118, and asparagine 140; that span reads QNFL.

It belongs to the class I-like SAM-binding methyltransferase superfamily. rRNA adenine N(6)-methyltransferase family. KsgA subfamily.

Its subcellular location is the mitochondrion. Probable S-adenosyl-L-methionine-dependent methyltransferase which specifically dimethylates mitochondrial 12S rRNA at the conserved stem loop. In contrast to mtTFB2, it does not have a critical role in either transcription or regulation of the copy number of mitochondrial DNA. In Drosophila melanogaster (Fruit fly), this protein is Dimethyladenosine transferase 1, mitochondrial (mtTFB1).